A 298-amino-acid polypeptide reads, in one-letter code: MIKQRTLKNIVCTTGIGLHTGQEVTLTLYPALANTGIIYRRIDLNPPVDFCVNIESVGSTFLCTCLKNNTYGVQVLTVEHLSAAQSGLGIDNIIIELNGPEVPIMDGSADPFVSLLLKAGIKELNSSKNFFRLKQIVRVEDGDRWAELRPFNGFTLDFTIDYDHPVVNMKNKHYFFNFTSKSFRSEISSARTFGFVDNIQKLKNCGFVLGGSLTSSVVMDKYQVVNSEGLRFNNELVRHKILDAVGDLFMCGYNLIGSFIGFKSGHTLNNKLLRAVLARRKAWEITSCIQGCDVSKIF.

The Zn(2+) site is built by H80, H239, and D243. Residue H266 is the Proton donor of the active site.

The protein belongs to the LpxC family. It depends on Zn(2+) as a cofactor.

The enzyme catalyses a UDP-3-O-[(3R)-3-hydroxyacyl]-N-acetyl-alpha-D-glucosamine + H2O = a UDP-3-O-[(3R)-3-hydroxyacyl]-alpha-D-glucosamine + acetate. It functions in the pathway glycolipid biosynthesis; lipid IV(A) biosynthesis; lipid IV(A) from (3R)-3-hydroxytetradecanoyl-[acyl-carrier-protein] and UDP-N-acetyl-alpha-D-glucosamine: step 2/6. Functionally, catalyzes the hydrolysis of UDP-3-O-myristoyl-N-acetylglucosamine to form UDP-3-O-myristoylglucosamine and acetate, the committed step in lipid A biosynthesis. This is UDP-3-O-acyl-N-acetylglucosamine deacetylase from Blochmanniella floridana.